The chain runs to 159 residues: MAIQIILNFILAFIWIFLSGSYTLNNLLLGFILGLGFVYLFSRILPGRFYFIKIYKILKLAVVFFVELLKANIDVLKIVLQPKLKNEPGFFVYHTDLKTDWQIVLLSNLITLTPGTVVLGISDDRKKIYIHSIDFSTKEEEVEGIKSSLEKVVREVGED.

4 consecutive transmembrane segments (helical) span residues 1–21 (MAIQIILNFILAFIWIFLSGS), 27–47 (LLLGFILGLGFVYLFSRILPG), 49–69 (FYFIKIYKILKLAVVFFVELL), and 101–121 (WQIVLLSNLITLTPGTVVLGI).

It belongs to the CPA3 antiporters (TC 2.A.63) subunit E family. May form a heterooligomeric complex that consists of seven subunits: mnhA1, mnhB1, mnhC1, mnhD1, mnhE1, mnhF1 and mnhG1.

The protein localises to the cell membrane. In terms of biological role, mnh complex is a Na(+)/H(+) antiporter involved in Na(+) excretion. This is Na(+)/H(+) antiporter subunit E1 (mnhE1) from Staphylococcus haemolyticus (strain JCSC1435).